We begin with the raw amino-acid sequence, 431 residues long: Serine hydroxymethyltransferase (431 aa).

Residues leucine 128 and 132 to 134 (GHL) each bind (6S)-5,6,7,8-tetrahydrofolate. The residue at position 237 (lysine 237) is an N6-(pyridoxal phosphate)lysine. Glutamate 253 is a binding site for (6S)-5,6,7,8-tetrahydrofolate.

Belongs to the SHMT family. As to quaternary structure, homodimer. Requires pyridoxal 5'-phosphate as cofactor.

It localises to the cytoplasm. The enzyme catalyses (6R)-5,10-methylene-5,6,7,8-tetrahydrofolate + glycine + H2O = (6S)-5,6,7,8-tetrahydrofolate + L-serine. Its pathway is one-carbon metabolism; tetrahydrofolate interconversion. It functions in the pathway amino-acid biosynthesis; glycine biosynthesis; glycine from L-serine: step 1/1. Catalyzes the reversible interconversion of serine and glycine with tetrahydrofolate (THF) serving as the one-carbon carrier. This reaction serves as the major source of one-carbon groups required for the biosynthesis of purines, thymidylate, methionine, and other important biomolecules. Also exhibits THF-independent aldolase activity toward beta-hydroxyamino acids, producing glycine and aldehydes, via a retro-aldol mechanism. The chain is Serine hydroxymethyltransferase from Cereibacter sphaeroides (strain ATCC 17023 / DSM 158 / JCM 6121 / CCUG 31486 / LMG 2827 / NBRC 12203 / NCIMB 8253 / ATH 2.4.1.) (Rhodobacter sphaeroides).